We begin with the raw amino-acid sequence, 179 residues long: 3-hydroxyanthranilate 3,4-dioxygenase 2 (179 aa).

Position 44 (R44) interacts with O2. Positions 48, 60, and 99 each coordinate Fe cation. A substrate-binding site is contributed by E60. Residues R103 and E113 each coordinate substrate.

This sequence belongs to the 3-HAO family. Fe(2+) is required as a cofactor.

The protein resides in the cytoplasm. It carries out the reaction 3-hydroxyanthranilate + O2 = (2Z,4Z)-2-amino-3-carboxymuconate 6-semialdehyde. Its pathway is cofactor biosynthesis; NAD(+) biosynthesis; quinolinate from L-kynurenine: step 3/3. Catalyzes the oxidative ring opening of 3-hydroxyanthranilate to 2-amino-3-carboxymuconate semialdehyde, which spontaneously cyclizes to quinolinate. In Aspergillus oryzae (strain ATCC 42149 / RIB 40) (Yellow koji mold), this protein is 3-hydroxyanthranilate 3,4-dioxygenase 2 (bna1-2).